We begin with the raw amino-acid sequence, 187 residues long: Ribose 1,5-bisphosphate phosphokinase PhnN (187 aa).

9 to 16 (GPSGSGKD) is an ATP binding site.

This sequence belongs to the ribose 1,5-bisphosphokinase family.

The enzyme catalyses alpha-D-ribose 1,5-bisphosphate + ATP = 5-phospho-alpha-D-ribose 1-diphosphate + ADP. It participates in metabolic intermediate biosynthesis; 5-phospho-alpha-D-ribose 1-diphosphate biosynthesis; 5-phospho-alpha-D-ribose 1-diphosphate from D-ribose 5-phosphate (route II): step 3/3. Catalyzes the phosphorylation of ribose 1,5-bisphosphate to 5-phospho-D-ribosyl alpha-1-diphosphate (PRPP). The polypeptide is Ribose 1,5-bisphosphate phosphokinase PhnN (Desulfomicrobium baculatum (strain DSM 4028 / VKM B-1378 / X) (Desulfovibrio baculatus)).